The sequence spans 466 residues: 3-isopropylmalate dehydratase large subunit (466 aa).

The [4Fe-4S] cluster site is built by Cys-347, Cys-407, and Cys-410.

This sequence belongs to the aconitase/IPM isomerase family. LeuC type 1 subfamily. In terms of assembly, heterodimer of LeuC and LeuD. It depends on [4Fe-4S] cluster as a cofactor.

The enzyme catalyses (2R,3S)-3-isopropylmalate = (2S)-2-isopropylmalate. It functions in the pathway amino-acid biosynthesis; L-leucine biosynthesis; L-leucine from 3-methyl-2-oxobutanoate: step 2/4. Its function is as follows. Catalyzes the isomerization between 2-isopropylmalate and 3-isopropylmalate, via the formation of 2-isopropylmaleate. The polypeptide is 3-isopropylmalate dehydratase large subunit (Salmonella paratyphi A (strain ATCC 9150 / SARB42)).